Here is a 327-residue protein sequence, read N- to C-terminus: Phenylalanine--tRNA ligase alpha subunit (327 aa).

Glu252 is a Mg(2+) binding site.

It belongs to the class-II aminoacyl-tRNA synthetase family. Phe-tRNA synthetase alpha subunit type 1 subfamily. Tetramer of two alpha and two beta subunits. Mg(2+) serves as cofactor.

The protein localises to the cytoplasm. The catalysed reaction is tRNA(Phe) + L-phenylalanine + ATP = L-phenylalanyl-tRNA(Phe) + AMP + diphosphate + H(+). The sequence is that of Phenylalanine--tRNA ligase alpha subunit from Salmonella newport (strain SL254).